The following is a 631-amino-acid chain: 1-deoxy-D-xylulose-5-phosphate synthase (631 aa).

Residues H73 and S114–A116 contribute to the thiamine diphosphate site. Position 145 (D145) interacts with Mg(2+). Thiamine diphosphate is bound by residues G146–A147, N175, Y286, and E368. N175 serves as a coordination point for Mg(2+).

The protein belongs to the transketolase family. DXPS subfamily. As to quaternary structure, homodimer. The cofactor is Mg(2+). Thiamine diphosphate serves as cofactor.

The catalysed reaction is D-glyceraldehyde 3-phosphate + pyruvate + H(+) = 1-deoxy-D-xylulose 5-phosphate + CO2. It participates in metabolic intermediate biosynthesis; 1-deoxy-D-xylulose 5-phosphate biosynthesis; 1-deoxy-D-xylulose 5-phosphate from D-glyceraldehyde 3-phosphate and pyruvate: step 1/1. In terms of biological role, catalyzes the acyloin condensation reaction between C atoms 2 and 3 of pyruvate and glyceraldehyde 3-phosphate to yield 1-deoxy-D-xylulose-5-phosphate (DXP). The polypeptide is 1-deoxy-D-xylulose-5-phosphate synthase (Nocardia farcinica (strain IFM 10152)).